The primary structure comprises 217 residues: MKLRYSRVNKMLVAEVFDINKNKVSEIELNDAVFGAEVNDAVIYDVVRMQMASRRFGTAATKGRSDVSGGGKKPWRQKGTGRARSGTSRSPIWRGGGIVFGPVPRDYKYNVPKKVRKNALRSVLSLKYQGQKLVVLKDFPLDEIKTKKFKEVVDRFGLKKALFVTEERNEFLEKSSRNIAGIKMVRSEGLNVYDVLNHEHLVIIEPAVKKLEGALKS.

The disordered stretch occupies residues 58–90; the sequence is TAATKGRSDVSGGGKKPWRQKGTGRARSGTSRS.

Belongs to the universal ribosomal protein uL4 family. In terms of assembly, part of the 50S ribosomal subunit.

Functionally, one of the primary rRNA binding proteins, this protein initially binds near the 5'-end of the 23S rRNA. It is important during the early stages of 50S assembly. It makes multiple contacts with different domains of the 23S rRNA in the assembled 50S subunit and ribosome. In terms of biological role, forms part of the polypeptide exit tunnel. The protein is Large ribosomal subunit protein uL4 of Syntrophus aciditrophicus (strain SB).